Consider the following 132-residue polypeptide: Small ribosomal subunit protein uS11 (132 aa).

The protein belongs to the universal ribosomal protein uS11 family. In terms of assembly, part of the 30S ribosomal subunit. Interacts with proteins S7 and S18. Binds to IF-3.

Located on the platform of the 30S subunit, it bridges several disparate RNA helices of the 16S rRNA. Forms part of the Shine-Dalgarno cleft in the 70S ribosome. The sequence is that of Small ribosomal subunit protein uS11 from Lachnoclostridium phytofermentans (strain ATCC 700394 / DSM 18823 / ISDg) (Clostridium phytofermentans).